The sequence spans 290 residues: ATP synthase gamma chain (290 aa).

It belongs to the ATPase gamma chain family. In terms of assembly, F-type ATPases have 2 components, CF(1) - the catalytic core - and CF(0) - the membrane proton channel. CF(1) has five subunits: alpha(3), beta(3), gamma(1), delta(1), epsilon(1). CF(0) has three main subunits: a, b and c.

The protein resides in the cell inner membrane. Its function is as follows. Produces ATP from ADP in the presence of a proton gradient across the membrane. The gamma chain is believed to be important in regulating ATPase activity and the flow of protons through the CF(0) complex. The sequence is that of ATP synthase gamma chain from Phenylobacterium zucineum (strain HLK1).